A 203-amino-acid chain; its full sequence is Twist-related protein 1 (203 aa).

Residues 1–18 (MMQDVSSSPVSPADDSLS) show a composition bias toward low complexity. The interval 1–107 (MMQDVSSSPV…GGSPQSCEEL (107 aa)) is disordered. Residues 34–43 (RGGRKRRSSR) show a composition bias toward basic residues. Composition is skewed to gly residues over residues 46–65 (AGGG…GGDE) and 80–100 (GCGG…GGGS). One can recognise a bHLH domain in the interval 109–160 (TQRVMANVRERQRTQSLNEPFAALRKIIPTLPSDKLSKIQTLKLAARYIDFL). The tract at residues 162–192 (RVLQSDELDSKTASCSYVAHEWLSYAFSVWR) is sufficient for transactivation activity.

Efficient DNA binding requires dimerization with another bHLH protein. Homodimer or heterodimer with E proteins such as TCF3. ID1 binds preferentially to TCF3 but does not interact efficiently with TWIST1 so ID1 levels control the amount of TCF3 available to dimerize with TWIST and thus determine the type of dimer formed.

It is found in the nucleus. Its function is as follows. Acts as a transcriptional regulator. Inhibits myogenesis by sequestrating E proteins, inhibiting trans-activation by MEF2, and inhibiting DNA-binding by MYOD1 through physical interaction. This interaction probably involves the basic domains of both proteins. Also represses expression of pro-inflammatory cytokines such as TNFA and IL1B. Regulates cranial suture patterning and fusion. Activates transcription as a heterodimer with E proteins. Regulates gene expression differentially, depending on dimer composition. Homodimers induce expression of FGFR2 and POSTN while heterodimers repress FGFR2 and POSTN expression and induce THBS1 expression. Heterodimerization is also required for osteoblast differentiation. Represses the activity of the circadian transcriptional activator: NPAS2-BMAL1 heterodimer. The chain is Twist-related protein 1 (TWIST1) from Gorilla gorilla gorilla (Western lowland gorilla).